Here is a 226-residue protein sequence, read N- to C-terminus: Phosphate propanoyltransferase (226 aa).

44 to 46 (VSN) contributes to the CoA binding site. 2 residues coordinate Zn(2+): His-48 and His-50. Positions 72, 90, and 97 each coordinate CoA. Residue Arg-103 coordinates phosphate. Glu-109 contacts Zn(2+). CoA is bound at residue Phe-116. Zn(2+)-binding residues include His-157, His-159, and His-204. Asn-211 contacts CoA.

Belongs to the PduL family. In terms of assembly, full-length protein forms large oligomers. Homodimer, when purified in the absence of the encapsulation peptide (EP, residues 1-47). The EP may influence oligomerization. The cofactor is Zn(2+).

The protein resides in the bacterial microcompartment. The enzyme catalyses propanoyl-CoA + phosphate = propanoyl phosphate + CoA. The protein operates within polyol metabolism; 1,2-propanediol degradation. Involved in 1,2-propanediol (1,2-PD) utilization within the bacterial microcompartment (BMC) dedicated to 1,2-PD degradation by catalyzing the conversion of propanoyl-CoA to propanoyl-phosphate. CoA is regenerated within the pdu BMC (for use by PduP) via this enzyme, although there must also be cofactor transport across the BMC. Directly targeted to the BMC. Phosphate is probably the first substrate to bind in the forward direction. CoA is probably the first substrate to bind in the reverse direction, and might bind to the enzyme as the BMC assembles, ensuring cofactor encapsulation. In Rhodopseudomonas palustris (strain BisB18), this protein is Phosphate propanoyltransferase.